Consider the following 413-residue polypeptide: MAAATNRFRALYSSSRVATPQAGSASYLSYRGYATTDPSSATGGASTAGKRRTTFTDKLNAGPSFGDFVSGGRDNAPLDPSEAYALKTALVGPAGRKKEMTRLPSWLKTPIPDSKNYQRLKKDLRGLNLHTVCEEARCPNISDCWGGGDKAAATATIMLMGDTCTRGCRFCSVKTSRAPPPLDPHEPENTAEAISRWGLGYVVLTSVDRDDLADGGARHFAETVIKIKQKAPNILVECLTGDYAGDLEMVGVVARSGLDVYAHNVETVEALTPHVRDRRATFQQSLRVLEAAKKAKPSLITKTSLMLGLGETEEQLWDALRQLRAVNVDVVTFGQYMRPTKRHMAVHEYVTPDRFELWRQRALDMGFLYCASGPLVRSSYKAGEAFIENVLKKRRSGAPEVSHNTVPVDEATR.

The N-terminal 33 residues, 1–33 (MAAATNRFRALYSSSRVATPQAGSASYLSYRGY), are a transit peptide targeting the mitochondrion. [4Fe-4S] cluster is bound by residues Cys-133, Cys-138, Cys-144, Cys-164, Cys-168, Cys-171, and Ser-379. One can recognise a Radical SAM core domain in the interval 147–368 (GGDKAAATAT…RQRALDMGFL (222 aa)).

It belongs to the radical SAM superfamily. Lipoyl synthase family. Requires [4Fe-4S] cluster as cofactor.

The protein resides in the mitochondrion. The catalysed reaction is [[Fe-S] cluster scaffold protein carrying a second [4Fe-4S](2+) cluster] + N(6)-octanoyl-L-lysyl-[protein] + 2 oxidized [2Fe-2S]-[ferredoxin] + 2 S-adenosyl-L-methionine + 4 H(+) = [[Fe-S] cluster scaffold protein] + N(6)-[(R)-dihydrolipoyl]-L-lysyl-[protein] + 4 Fe(3+) + 2 hydrogen sulfide + 2 5'-deoxyadenosine + 2 L-methionine + 2 reduced [2Fe-2S]-[ferredoxin]. It functions in the pathway protein modification; protein lipoylation via endogenous pathway; protein N(6)-(lipoyl)lysine from octanoyl-[acyl-carrier-protein]: step 2/2. Catalyzes the radical-mediated insertion of two sulfur atoms into the C-6 and C-8 positions of the octanoyl moiety bound to the lipoyl domains of lipoate-dependent enzymes, thereby converting the octanoylated domains into lipoylated derivatives. The polypeptide is Lipoyl synthase, mitochondrial (Emericella nidulans (strain FGSC A4 / ATCC 38163 / CBS 112.46 / NRRL 194 / M139) (Aspergillus nidulans)).